The following is a 174-amino-acid chain: Translation initiation factor IF-3 (174 aa).

This sequence belongs to the IF-3 family. As to quaternary structure, monomer.

The protein resides in the cytoplasm. In terms of biological role, IF-3 binds to the 30S ribosomal subunit and shifts the equilibrium between 70S ribosomes and their 50S and 30S subunits in favor of the free subunits, thus enhancing the availability of 30S subunits on which protein synthesis initiation begins. The protein is Translation initiation factor IF-3 of Helicobacter hepaticus (strain ATCC 51449 / 3B1).